Consider the following 490-residue polypeptide: Transmembrane protein 185-like (490 aa).

A compositionally biased stretch (low complexity) spans 1-31 (MIENENTSLLSTSSSSTSSSPNNANSPSSLN). Disordered regions lie at residues 1–151 (MIEN…SKYK) and 455–490 (NMIN…ISNL). Positions 47 to 59 (TSGNNSPSAQITK) are enriched in polar residues. 2 stretches are compositionally biased toward low complexity: residues 66-80 (SNNS…NSRS) and 89-108 (NNNN…NNIN). Positions 109 to 125 (KHNSIVYNKSNNKLNSI) are enriched in polar residues. The span at 133–145 (QGGGGGNGNGNGN) shows a compositional bias: gly residues. The span at 463 to 472 (SESESDDETE) shows a compositional bias: acidic residues.

The protein belongs to the TMEM185 family.

The sequence is that of Transmembrane protein 185-like from Dictyostelium discoideum (Social amoeba).